Consider the following 183-residue polypeptide: Holliday junction branch migration complex subunit RuvA (183 aa).

Positions 1–64 are domain I; that stretch reads MVVGIEGIIT…EDSNKFYGFL (64 aa). The segment at 65–139 is domain II; it reads DKDEQKMFEM…DTKTKLENVS (75 aa). Residue Ser-139 is a region of interest, flexible linker. The segment at 139-183 is domain III; the sequence is SDDKSEALAALLTLGFKQEKIISVLASAQATGTSELIKEALKKLG.

It belongs to the RuvA family. In terms of assembly, homotetramer. Forms an RuvA(8)-RuvB(12)-Holliday junction (HJ) complex. HJ DNA is sandwiched between 2 RuvA tetramers; dsDNA enters through RuvA and exits via RuvB. An RuvB hexamer assembles on each DNA strand where it exits the tetramer. Each RuvB hexamer is contacted by two RuvA subunits (via domain III) on 2 adjacent RuvB subunits; this complex drives branch migration. In the full resolvosome a probable DNA-RuvA(4)-RuvB(12)-RuvC(2) complex forms which resolves the HJ.

The protein resides in the cytoplasm. Functionally, the RuvA-RuvB-RuvC complex processes Holliday junction (HJ) DNA during genetic recombination and DNA repair, while the RuvA-RuvB complex plays an important role in the rescue of blocked DNA replication forks via replication fork reversal (RFR). RuvA specifically binds to HJ cruciform DNA, conferring on it an open structure. The RuvB hexamer acts as an ATP-dependent pump, pulling dsDNA into and through the RuvAB complex. HJ branch migration allows RuvC to scan DNA until it finds its consensus sequence, where it cleaves and resolves the cruciform DNA. The polypeptide is Holliday junction branch migration complex subunit RuvA (Campylobacter jejuni subsp. jejuni serotype O:23/36 (strain 81-176)).